The following is a 683-amino-acid chain: MNIRMGTKGKRPLRSLTPRDKIHAIQRIHDGESKASVARDIGVPESTLRGWCKNEDKLRFMSRQSTTDKMCADALADKLDVSTGLLGPPEKRQRIDPSLPLNFSNKMKFDELGFKRAPLNGLDYSTNKNISELNYNGLAVDYVGFNGQHKVFSGDINRPANPSPNAISPLSSLTHLSGLTGLSQSPLAISFNELTTNLNLLAQLNPSLAAMSGLNSFPTTANNLRNSKPSVQPPLQVQSPRSDSGDRTPGLSVKNWAKQKPLSAVSSDVSCSINLTIKNEAKGGDIKSPSPSIAPSHVGSIISLSNLAEDPLLYWLKSQQTMLGLNSLYPPMGMTSPPIRSSTPQHIIQHAQTPPLPSAPLTPSSTPSGSLDEKNVAWYNWCKVFGASLNTLNPNSATLAALQANSLQHQHQPISAVSDGTDIADTSKGPFDNILYSHLTKESETPSVRSLSSNEHNQLDQIEGDEVTDPDLDAEIEGDVPGKPEDLSASAKRITPSQSPIASLVPESHTTEPCAKTSTTPSDCISRPGSVGGDCKKILDNMLYKIGGIKSHMPTIVDTACESEASFINEHNQHSNNNDISASNNNNNNSNKTDEEEKAKYLDLTGDNEDVKAIRHGEKFLQWLENCSNPRVTAVQLMQLRFLIAAIKSSNEPQVTEKPNKDLLENEENTEEDSCRNKIRRRK.

Residues 7–58 form the HTH psq-type domain; the sequence is TKGKRPLRSLTPRDKIHAIQRIHDGESKASVARDIGVPESTLRGWCKNEDKL. The segment at residues 34–54 is a DNA-binding region (H-T-H motif); it reads KASVARDIGVPESTLRGWCKN. Disordered stretches follow at residues 220–255, 336–369, 443–525, 572–597, and 652–683; these read TANN…SVKN, SPPI…TPSG, SETP…SDCI, NQHS…DEEE, and EPQV…RRRK. Low complexity predominate over residues 227–242; the sequence is SKPSVQPPLQVQSPRS. 2 stretches are compositionally biased toward polar residues: residues 338–352 and 445–460; these read PIRS…QHAQ and TPSV…NQLD. Residues 462–478 show a composition bias toward acidic residues; it reads IEGDEVTDPDLDAEIEG. Low complexity predominate over residues 575-591; the sequence is SNNNDISASNNNNNNSN.

Homomers. Interacts with itself, danr, ey and dac to form a complex (or complexes) containing the RD factors.

Its subcellular location is the nucleus. Its function is as follows. Probable transcription factor with a role in the retinal determination (RD) network. Regulates ato expression and is required for normal R8 induction and differentiation. Danr appears to repress Dan expression, but Dan is required for Danr expression anterior to the morphogenetic furrow (MF). Dan and Danr lie downstream of so and require dac function for highest levels of expression. Contributes to differentiation of antenna-specific characteristics; effector gene that acts downstream of homothorax (hth), Distal-less (Dll), cut (ct) and spineless (ss) genes to control differentiation of distal antennal structures. This chain is Protein distal antenna, found in Drosophila pseudoobscura pseudoobscura (Fruit fly).